The primary structure comprises 509 residues: MSLMLAALILTVAFVICSLTGFTQRKLSGGRLPKCLPSFPLIGSLLSLRSDLPPHLLFQKLQKTYGNLFSLMMGPHYAVVINNHQHAKEVLLKKGKIFAGRPSMVTTDLLSRGGKDIAFGKYGPAWKFHRKLVLSALHLFGDGSAGIEKMICQEATSMCSTFERLNNAAHDMMPDVTRAVTNVICLLCFNSTYEKEDPEFQTMRKYSQGIVNTVAKDSLIDIFPWLQFFPNENLHTLKQCIATRDSILQKKFEDHKANYSSDSANDLFNILLKAKMNAENNNSSVHEAGLTDDHMVMTVADIFGAGVETSSTAFAWMIIYLIHHPEVQKKIQEEIDSNIGFERTPKMSDKGNMNFLNATIHEILRIQPVSPLLIPHVALADSSIGDYTIPKGTRVIINLWAIHHDEKEWKNPDAFDPGRFLDEDGKYVCSSSESYLPFGAGTRVCLGEMLARMELFLFTSWILQRFTVQVPPGYPPPDKEGKFGIVLQPLKFKVQLKLRKAWENRGLHD.

Residue Cys-445 participates in heme binding.

Belongs to the cytochrome P450 family. Requires heme as cofactor.

It is found in the membrane. It carries out the reaction a C21-steroid + reduced [NADPH--hemoprotein reductase] + O2 = a 17alpha-hydroxy-C21-steroid + oxidized [NADPH--hemoprotein reductase] + H2O + H(+). It catalyses the reaction 17alpha-hydroxyprogesterone + reduced [NADPH--hemoprotein reductase] + O2 = androst-4-ene-3,17-dione + acetate + oxidized [NADPH--hemoprotein reductase] + H2O + 2 H(+). The catalysed reaction is 17alpha-hydroxypregnenolone + reduced [NADPH--hemoprotein reductase] + O2 = 3beta-hydroxyandrost-5-en-17-one + acetate + oxidized [NADPH--hemoprotein reductase] + H2O + 2 H(+). Its pathway is lipid metabolism; steroid biosynthesis. In terms of biological role, conversion of pregnenolone and progesterone to their 17-alpha-hydroxylated products and subsequently to dehydroepiandrosterone (DHEA) and androstenedione. Catalyzes both the 17-alpha-hydroxylation and the 17,20-lyase reaction. The chain is Steroid 17-alpha-hydroxylase/17,20 lyase (CYP17A1) from Squalus acanthias (Spiny dogfish).